The chain runs to 1287 residues: MEPIYPFARPQMNTRFPSSRMVPFHFPPSKCALWNPTPTGDFIYLHLSYYRNPKLVVTEKTIRLAYRHAKQNKKNSSCFLLGSLTADEDEEGVTLTVDRFDPGREVPECLEITPTASLPGDFLIPCKVHTQELCSREMIVHSVDDFSSALKALQCHICSKDSLDCGKLLSLRVHITSRESLDSVEFDLHWAAVTLANNFKCTPVKPIPIIPTALARNLSSNLNISQVQGTYKYGYLTMDETRKLLLLLESDPKVYSLPLVGIWLSGITHIYSPQVWACCLRYIFNSSVQERVFSESGNFIIVLYSMTHKEPEFYECFPCDGKIPDFRFQLLTSKETLHLFKNVEPPDKNPIRCELSAESQNAETEFFSKASKNFSIKRSSQKLSSGKMPIHDHDSGVEDEDFSPRPIPSPHPVSQKISKIQPSVPELSLVLDGNFIESNPLPTPLEMVNNENPPLINHLEHLKPLQPQLYDEKHSPEVEAGEPSLRGIPNQLNQDKPALLRHCKVRQPPAYKKGNPHTRNSIKPSSHNGPSHDIFEKLQTVSAGNVQNEEYPIRPSTLNSRQSSLAPQSQPHDFVFSPHNSGRPMELQIPTPPLPSYCSTNVCRCCQHHSHIQYSPLNSWQGANTVGSIQDVQSEALQKHSLFHPSGCPALYCNAFCSSSSPIALRPQGDMGSCSPHSNIEPSPVARPPSHMDLCNPQPCTVCMHTPKTESDNGMMGLSPDAYRFLTEQDRQLRLLQAQIQRLLEAQSLMPCSPKTTAVEDTVQAGRQMELVSVEAQSSPGLHMRKGVSIAVSTGASLFWNAAGEDQEPDSQMKQDDTKISSEDMNFSVDINNEVTSLPGSASSLKAVDIPSFEESNIAVEEEFNQPLSVSNSSLVVRKEPDVPVFFPSGQLAESVSMCLQTGPTGGASNNSETSEEPKIEHVMQPLLHQPSDNQKIYQDLLGQVNHLLNSSSKETEQPSTKAVIISHECTRTQNVYHTKKKTHHSRLVDKDCVLNATLKQLRSLGVKIDSPTKVKKNAHNVDHASVLACISPEAVISGLNCMSFANVGMSGLSPNGVDLSMEANAIALKYLNENQLSQLSVTRSNQNNCDPFSLLHINTDRSTVGLSLISPNNMSFATKKYMKRYGLLQSSDNSEDEEEPPDNADSKSEYLLNQNLRSIPEQLGGQKEPSKNDHEIINCSNCESVGTNADTPVLRNITNEVLQTKAKQQLTEKPAFLVKNLKPSPAVNLRTGKAEFTQHPEKENEGDITIFPESLQPSETLKQMNSMNSVGTFLDVKRLRQLPKLF.

Met-1 bears the N-acetylmethionine mark. The segment at 1–1018 is interaction with RBM14; that stretch reads MEPIYPFARP…IDSPTKVKKN (1018 aa). An interaction with CPAP region spans residues 231–781; it reads YKYGYLTMDE…VSVEAQSSPG (551 aa). Disordered stretches follow at residues 378–417 and 508–533; these read RSSQKLSSGKMPIHDHDSGVEDEDFSPRPIPSPHPVSQKI and PPAYKKGNPHTRNSIKPSSHNGPSHD. The residue at position 395 (Ser-395) is a Phosphoserine. Over residues 517-529 the composition is skewed to polar residues; that stretch reads HTRNSIKPSSHNG. The segment at 584–779 is PIN1-binding; sequence PMELQIPTPP…ELVSVEAQSS (196 aa). A phosphoserine mark is found at Ser-753, Ser-779, and Ser-1135.

Homodimer. Interacts with PIN1 via its WW domain. This interaction is dependent on STIL mitotic phosphorylation. Interacts with CPAP. Interacts with RBM14 and this interaction interferes with the interaction of STIL with CPAP. Forms a complex with CPAP and SASS6. Interacts (via N-terminus) with CEP85; this interaction is essential for efficient centriolar targeting of STIL and subsequent PLK4 activation. Post-translationally, ubiquitinated. Phosphorylated following the activation of the mitotic checkpoint. As to expression, expressed in all hematopoietic tissues and cell lines. Highly expressed in a variety of tumors characterized by increased mitotic activity with highest expression in lung cancer.

It localises to the cytoplasm. Its subcellular location is the cytosol. It is found in the cytoskeleton. The protein resides in the microtubule organizing center. The protein localises to the centrosome. It localises to the centriole. Its subcellular location is the cell cortex. In terms of biological role, immediate-early gene. Plays an important role in embryonic development as well as in cellular growth and proliferation; its long-term silencing affects cell survival and cell cycle distribution as well as decreases CDK1 activity correlated with reduced phosphorylation of CDK1. Plays a role as a positive regulator of the sonic hedgehog pathway, acting downstream of PTCH1. Plays an important role in the regulation of centriole duplication. Required for the onset of procentriole formation and proper mitotic progression. During procentriole formation, is essential for the correct loading of SASS6 and CPAP to the base of the procentriole to initiate procentriole assembly. In complex with STIL acts as a modulator of PLK4-driven cytoskeletal rearrangements and directional cell motility. This Homo sapiens (Human) protein is SCL-interrupting locus protein (STIL).